Consider the following 263-residue polypeptide: 3'-5' ssDNA/RNA exonuclease TatD (263 aa).

A divalent metal cation-binding residues include Glu-91, His-127, and His-152.

Belongs to the metallo-dependent hydrolases superfamily. TatD-type hydrolase family. TatD subfamily. In terms of assembly, monomer. Mg(2+) is required as a cofactor.

Its subcellular location is the cytoplasm. Functionally, 3'-5' exonuclease that prefers single-stranded DNA and RNA. May play a role in the H(2)O(2)-induced DNA damage repair. The protein is 3'-5' ssDNA/RNA exonuclease TatD of Citrobacter rodentium (strain ICC168) (Citrobacter freundii biotype 4280).